Reading from the N-terminus, the 1358-residue chain is Phosphoinositide 3-kinase regulatory subunit 4 (1358 aa).

G2 is lipidated: N-myristoyl glycine. The 299-residue stretch at 26–324 (FEYDKSLGST…AFPEIFYTFL (299 aa)) folds into the Protein kinase domain. ATP is bound by residues 32–40 (LGSTRFFKV) and K53. The active-site Proton acceptor is the D148. HEAT repeat units lie at residues 413 to 450 (ILLD…LVQE), 458 to 495 (IYPE…TALR), 572 to 610 (KAND…YVGW), and 612 to 648 (SSSI…LGLL). Residues S808, S813, S853, and S865 each carry the phosphoserine modification. WD repeat units follow at residues 991-1030 (EHKS…GKTT), 1040-1079 (RIGG…LPKS), 1093-1134 (KEDG…NAWT), 1139-1178 (LKSG…PISS), 1182-1223 (PSRA…RRLT), and 1237-1278 (PSPH…RSYV). The tract at residues 1307–1326 (KQKVGPSDDTPRRGPESLPV) is disordered. Residues 1315–1326 (DTPRRGPESLPV) show a composition bias toward basic and acidic residues. A Phosphothreonine modification is found at T1316. A WD 7 repeat occupies 1327–1358 (GHHDIITDIATFQTTQGFIVTASRDGIVKVWK).

This sequence belongs to the protein kinase superfamily. Ser/Thr protein kinase family. As to quaternary structure, component of the PI3K (PI3KC3/PI3K-III/class III phosphatidylinositol 3-kinase) complex the core of which is composed of the catalytic subunit PIK3C3, the regulatory subunit PIK3R4 and BECN1 associating with additional regulatory/auxiliary subunits to form alternative complex forms. Alternative complex forms containing a fourth regulatory subunit in a mutually exclusive manner are PI3K complex I (PI3KC3-C1) containing ATG14, and PI3K complex II (PI3KC3-C2) containing UVRAG. PI3KC3-C1 displays a V-shaped architecture with PIK3R4 serving as a bridge between PIK3C3 and the ATG14:BECN1 subcomplex. Both, PI3KC3-C1 and PI3KC3-C2, can associate with further regulatory subunits, such as RUBCN, SH3GLB1/Bif-1, AMBRA1 and NRBF2. PI3KC3-C1 probably associates with PIK3CB. Interacts with RAB7A in the presence of PIK3C3/VPS34. Interacts with NRBF2. Interacts with ARMC3. Requires Mn(2+) as cofactor. Post-translationally, myristoylated. Probably autophosphorylated.

The protein resides in the late endosome. The protein localises to the cytoplasmic vesicle. It is found in the autophagosome. It localises to the membrane. The enzyme catalyses L-seryl-[protein] + ATP = O-phospho-L-seryl-[protein] + ADP + H(+). It catalyses the reaction L-threonyl-[protein] + ATP = O-phospho-L-threonyl-[protein] + ADP + H(+). Its function is as follows. Regulatory subunit of the PI3K complex that mediates formation of phosphatidylinositol 3-phosphate; different complex forms are believed to play a role in multiple membrane trafficking pathways: PI3KC3-C1 is involved in initiation of autophagosomes and PI3KC3-C2 in maturation of autophagosomes and endocytosis. Involved in regulation of degradative endocytic trafficking and cytokinesis, probably in the context of PI3KC3-C2. The chain is Phosphoinositide 3-kinase regulatory subunit 4 (Pik3r4) from Mus musculus (Mouse).